The following is a 133-amino-acid chain: Succinate dehydrogenase assembly factor 3, mitochondrial (133 aa).

Residues 1-12 (MNNKLIYRSVRF) constitute a mitochondrion transit peptide.

Belongs to the complex I LYR family. SDHAF3 subfamily. As to quaternary structure, interacts with SDH2 within an SDH1-SDH2 subcomplex.

Its subcellular location is the mitochondrion. The protein resides in the mitochondrion intermembrane space. It is found in the mitochondrion matrix. In terms of biological role, plays an essential role in the assembly of succinate dehydrogenase (SDH), an enzyme complex (also referred to as respiratory complex II) that is a component of both the tricarboxylic acid (TCA) cycle and the mitochondrial electron transport chain, and which couples the oxidation of succinate to fumarate with the reduction of ubiquinone (coenzyme Q) to ubiquinol. Promotes maturation of the iron-sulfur protein subunit SDH2 of the SDH catalytic dimer, protecting it from the deleterious effects of oxidants. Acts together with SDHAF1 (SDH6). In Saccharomyces cerevisiae (strain ATCC 204508 / S288c) (Baker's yeast), this protein is Succinate dehydrogenase assembly factor 3, mitochondrial.